The sequence spans 455 residues: Asparagine--tRNA ligase (455 aa).

The protein belongs to the class-II aminoacyl-tRNA synthetase family. As to quaternary structure, homodimer.

Its subcellular location is the cytoplasm. It carries out the reaction tRNA(Asn) + L-asparagine + ATP = L-asparaginyl-tRNA(Asn) + AMP + diphosphate + H(+). This is Asparagine--tRNA ligase from Lawsonia intracellularis (strain PHE/MN1-00).